A 100-amino-acid chain; its full sequence is Aspartyl/glutamyl-tRNA(Asn/Gln) amidotransferase subunit C (100 aa).

It belongs to the GatC family. Heterotrimer of A, B and C subunits.

It carries out the reaction L-glutamyl-tRNA(Gln) + L-glutamine + ATP + H2O = L-glutaminyl-tRNA(Gln) + L-glutamate + ADP + phosphate + H(+). The catalysed reaction is L-aspartyl-tRNA(Asn) + L-glutamine + ATP + H2O = L-asparaginyl-tRNA(Asn) + L-glutamate + ADP + phosphate + 2 H(+). Allows the formation of correctly charged Asn-tRNA(Asn) or Gln-tRNA(Gln) through the transamidation of misacylated Asp-tRNA(Asn) or Glu-tRNA(Gln) in organisms which lack either or both of asparaginyl-tRNA or glutaminyl-tRNA synthetases. The reaction takes place in the presence of glutamine and ATP through an activated phospho-Asp-tRNA(Asn) or phospho-Glu-tRNA(Gln). This is Aspartyl/glutamyl-tRNA(Asn/Gln) amidotransferase subunit C from Streptococcus equi subsp. equi (strain 4047).